The following is an 83-amino-acid chain: Alpha-neurotoxin NTX-1 (83 aa).

The signal sequence occupies residues 1-21; sequence MKTLLLTLLVVTIVCLDLGYT. Intrachain disulfides connect Cys-24-Cys-45, Cys-38-Cys-62, Cys-64-Cys-75, and Cys-76-Cys-81.

Belongs to the three-finger toxin family. Short-chain subfamily. Type I alpha-neurotoxin sub-subfamily. In terms of tissue distribution, expressed by the venom gland.

The protein resides in the secreted. Its function is as follows. Binds to muscle nicotinic acetylcholine receptor (nAChR) and inhibit acetylcholine from binding to the receptor, thereby impairing neuromuscular transmission. The sequence is that of Alpha-neurotoxin NTX-1 from Naja sputatrix (Malayan spitting cobra).